The sequence spans 293 residues: Elongation factor Ts (293 aa).

The tract at residues 80-83 (TDFV) is involved in Mg(2+) ion dislocation from EF-Tu.

The protein belongs to the EF-Ts family.

It is found in the cytoplasm. Associates with the EF-Tu.GDP complex and induces the exchange of GDP to GTP. It remains bound to the aminoacyl-tRNA.EF-Tu.GTP complex up to the GTP hydrolysis stage on the ribosome. This Lacticaseibacillus casei (strain BL23) (Lactobacillus casei) protein is Elongation factor Ts.